A 422-amino-acid polypeptide reads, in one-letter code: Glucosylglycerol-phosphate phosphatase (422 aa).

The active-site Proton donor is D403.

The protein belongs to the histidine acid phosphatase family. As to quaternary structure, monomer. Interacts with GGPS.

The enzyme catalyses 2-O-(alpha-D-glucopyranosyl)-sn-glycerol 3-phosphate + H2O = 2-O-(alpha-D-glucopyranosyl)glycerol + phosphate. Its function is as follows. Phosphorylates glucosylglycerol-phosphate the precursor of the osmoprotectant glucosylglycerol necessary for salt adaptation of Synechocystis. This is Glucosylglycerol-phosphate phosphatase (stpA) from Synechocystis sp. (strain ATCC 27184 / PCC 6803 / Kazusa).